A 350-amino-acid polypeptide reads, in one-letter code: Erythronate-4-phosphate dehydrogenase (350 aa).

Substrate-binding residues include S45 and T66. Residues 124–125 (QV), D144, 203–205 (ASR), and D226 each bind NAD(+). R205 is an active-site residue. Residue E231 is part of the active site. Catalysis depends on H248, which acts as the Proton donor. G251 contacts NAD(+).

Belongs to the D-isomer specific 2-hydroxyacid dehydrogenase family. PdxB subfamily. In terms of assembly, homodimer.

It is found in the cytoplasm. It catalyses the reaction 4-phospho-D-erythronate + NAD(+) = (R)-3-hydroxy-2-oxo-4-phosphooxybutanoate + NADH + H(+). The protein operates within cofactor biosynthesis; pyridoxine 5'-phosphate biosynthesis; pyridoxine 5'-phosphate from D-erythrose 4-phosphate: step 2/5. Catalyzes the oxidation of erythronate-4-phosphate to 3-hydroxy-2-oxo-4-phosphonooxybutanoate. This Legionella pneumophila (strain Lens) protein is Erythronate-4-phosphate dehydrogenase.